The chain runs to 37 residues: Large ribosomal subunit protein bL36 (37 aa).

This sequence belongs to the bacterial ribosomal protein bL36 family.

The chain is Large ribosomal subunit protein bL36 from Mycobacteroides abscessus (strain ATCC 19977 / DSM 44196 / CCUG 20993 / CIP 104536 / JCM 13569 / NCTC 13031 / TMC 1543 / L948) (Mycobacterium abscessus).